Consider the following 1548-residue polypeptide: Nuclear factor of activated T-cells 5 (1548 aa).

Residues 54 to 106 (QLPPPRETSAASMSQTSGGEAGSPPPAVVAADASSAPSSSMGGACSSFTTSSS) are disordered. A compositionally biased stretch (low complexity) spans 81-106 (VVAADASSAPSSSMGGACSSFTTSSS). Ser137 is modified (phosphoserine). Lys139 carries the N6-acetyllysine modification. The segment covering 141-151 (LTGNTVQQHPS) has biased composition (polar residues). 3 disordered regions span residues 141–180 (LTGN…QDEG), 192–237 (WMED…CEES), and 258–282 (TTDN…GVKK). Ser151 carries the phosphoserine modification. Thr152 carries the phosphothreonine; by CDK5 modification. Residue Ser172 is modified to Phosphoserine. The segment covering 196–209 (SPSNFSNMSTSSYN) has biased composition (low complexity). A compositionally biased stretch (basic residues) spans 217–229 (KSRKRNPKQRPGV). Residues 258–277 (TTDNKGNSKAGNGTLDSQKG) show a composition bias toward polar residues. The RHD domain maps to 281–460 (KKSPMLCGQY…SPILCTQPAG (180 aa)). The DNA-binding element occupies 310 to 317 (RARYLTEG). Residue Lys572 forms a Glycyl lysine isopeptide (Lys-Gly) (interchain with G-Cter in SUMO1); alternate linkage. Lys572 participates in a covalent cross-link: Glycyl lysine isopeptide (Lys-Gly) (interchain with G-Cter in SUMO2); alternate. Ser577 bears the Phosphoserine mark. Lys619 participates in a covalent cross-link: Glycyl lysine isopeptide (Lys-Gly) (interchain with G-Cter in SUMO2). Disordered regions lie at residues 659-682 (GNAS…QQLQ), 750-777 (TEAP…PNSV), 851-892 (PGMF…QQQQ), 970-1010 (SPPA…GAQA), 1097-1127 (LSQE…QLQP), and 1257-1388 (MQSN…QEQQ). Low complexity-rich tracts occupy residues 662–672 (SFSSPSSSHLS) and 751–765 (EAPQ…EQAQ). Composition is skewed to polar residues over residues 766-777 (IPSNIFPSPNSV), 851-860 (PGMFSSTESA), and 876-886 (VHQQTENTLSS). The span at 979 to 993 (TSTTTTPQVATPGST) shows a compositional bias: low complexity. Residues 1113–1127 (VHSQTSTASSEQLQP) are compositionally biased toward polar residues. Positions 1264–1283 (QEQQQQQQQQQQQQQQQQQQ) are enriched in low complexity. Composition is skewed to polar residues over residues 1284-1300 (SILF…ASQK) and 1308-1333 (FSPN…SNMA). Residues 1334-1348 (PMNQEQQPMQFQNQP) show a composition bias toward low complexity. The segment covering 1349–1388 (TVSSLQNPGPTPSESPQTSLFHSSPQIQLVQGSPSSQEQQ) has biased composition (polar residues).

In terms of assembly, homodimer when bound to DNA, completely encircles its DNA target. Interacts with CIDEC; this interaction is direct and retains NFAT5 in the cytoplasm. Does not bind with Fos and Jun transcription factors. Interacts with DDX5 and DDX17; this interaction leads to DDX5/DDX17 recruitment to LNC2 and S100A4 promoters and NFAT5-mediated DDX5/DDX17-enhanced transactivation. In terms of processing, phosphorylated. Phosphorylated at Thr-152 by CDK5 in response to osmotic stress; this phosphorylation mediates its rapid nuclear localization. Poly-ADP-ribosylated by PARP1 in response to DNA damage, promoting recruitment to sites of R-loop-associated DNA damage.

It localises to the nucleus. Its subcellular location is the cytoplasm. It is found in the chromosome. Transcription factor involved, among others, in the transcriptional regulation of osmoprotective and inflammatory genes. Binds the DNA consensus sequence 5'-[ACT][AG]TGGAAA[CAT]A[TA][ATC][CA][ATG][GT][GAC][CG][CT]-3'. Mediates the transcriptional response to hypertonicity. Positively regulates the transcription of LCN2 and S100A4 genes; optimal transactivation of these genes requires the presence of DDX5/DDX17. Also involved in the DNA damage response by preventing formation of R-loops; R-loops are composed of a DNA:RNA hybrid and the associated non-template single-stranded DNA. The polypeptide is Nuclear factor of activated T-cells 5 (Nfat5) (Rattus norvegicus (Rat)).